Here is a 226-residue protein sequence, read N- to C-terminus: MKSLKRLIKSNKKKGDKKNVSFMDWDEPPSYSDSRYGCYPSAPLFGVDEMMETLPTLGIQSLKIQYKCSLQVRAETPFTSFNDAARCISLWETDYRGYAGKKPFYRLLMLIATKKLRAAPMSLMDGNRPEYSSMIQGQSIVHHSLGVIPPMMHVPETFTREWNLLTNKGMITAQIWLGITDVVDDLNPLINPALFSDEKEMTLTSQMFGLELKKRNDNTWLISKSY.

A dynamin binding motif is present at residues 2 to 4 (KSL). The short motif at 28–31 (PPSY) is the PPXY motif element. A PTAP/PSAP motif motif is present at residues 40 to 43 (PSAP).

The protein belongs to the vesiculoviruses matrix protein family. Homomultimer. Interacts with viral nucleocapsid; this interaction contributes to the virion assembly. Interacts with the viral envelope glycoprotein; this interaction contributes to the virion assembly. Interacts with host RAE1-NUP98 complex. Interacts with host NEDD4 and TSG101. Interacts with host dynamin. Interacts with host NDUFAF4; the interaction inhibits viral propagation and is independent of interferon activation. Interacts with host GTF2H5; the interaction may inhibit host transcription. Post-translationally, phosphorylated by host.

It is found in the virion. Its subcellular location is the host endomembrane system. The protein localises to the host nucleus membrane. The protein resides in the host nucleus. It localises to the host cytoplasm. Forms a double layer around the helical nucleocapsid, the inner matrix layer binding to the N helix and the outer matrix layer binding to the envelope glycoprotein. Plays a major role in assembly and budding of virion, by recruiting cellular partners of the ESCRT complexes that play a key role in releasing the budding particle from the host membrane. Condensates the ribonucleocapsid core during virus assembly. Inhibits the host mRNA nuclear export thereby inducing the shut off of cellular transcription and preventing the interferon signaling and the establishment of antiviral state in infected cells. This shutoff presumably inhibits interferon signaling and thus establishment of antiviral state in virus infected cells. Induces cell-rounding, cytoskeleton disorganization and apoptosis in infected cell. Inhibits host transcription, possibly through interaction with host DNA repair factor IIH/TFIIH GTF2H5 subunit. This is Matrix protein (M) from Isfahan virus (ISFV).